Consider the following 225-residue polypeptide: O-methyltransferase rstn1 (225 aa).

Residues Gln-97 and His-142 each coordinate S-adenosyl-L-methionine.

It belongs to the methyltransferase superfamily.

The enzyme catalyses desmethylrestrictinol + S-adenosyl-L-methionine = restrictinol + S-adenosyl-L-homocysteine + H(+). It participates in antifungal biosynthesis. O-methyltransferase; part of the gene cluster that mediates the biosynthesis of the tetrahydropyranyl antifungal agent restricticin that acts as an inhibitor of CYP51 and blocks the ergosterol biosynthesis. Within the pathway, rstn1 uses S-adenosylmethionine to methylate position C4 of desmethylrestrictinol to produce restrictinol. The highly reducing polyketide synthase rstn3, the short chain dehydrogenase rstn4, the cyclase rstn5, the FAD-dependent monooxygenase rstn6 and the enoylreductase rstn7 are required to generate the first stable intermediate desmethylrestrictinol. Rstn3 with rstn7 biosynthesize the first polyketide chain intermediate that is reduced by rstn4, followed by epoxidation by rstn6 before 6-endo cyclization via epoxide opening by rstn5 leads to desmethylrestrictinol. The methyltransferase rstn1 then catalyzes the C4 O-methylation of desmethylrestrictinol to produce restrictinol, and the nonribosomal peptide synthetase rstn8 catalyzes the C3 esterification of restrictinol with glycine that leads to restricticin. The sequence is that of O-methyltransferase rstn1 from Aspergillus nomiae NRRL (strain ATCC 15546 / NRRL 13137 / CBS 260.88 / M93).